We begin with the raw amino-acid sequence, 226 residues long: Imidazoleglycerol-phosphate dehydratase (226 aa).

A disordered region spans residues 23–55 (LTGGPIERPQPSLFASEKGANTAGPDDASQTTA).

Belongs to the imidazoleglycerol-phosphate dehydratase family.

It catalyses the reaction D-erythro-1-(imidazol-4-yl)glycerol 3-phosphate = 3-(imidazol-4-yl)-2-oxopropyl phosphate + H2O. The protein operates within amino-acid biosynthesis; L-histidine biosynthesis; L-histidine from 5-phospho-alpha-D-ribose 1-diphosphate: step 6/9. This Maudiozyma humilis (Sour dough yeast) protein is Imidazoleglycerol-phosphate dehydratase (HIS3).